The chain runs to 184 residues: Late embryogenesis abundant protein (184 aa).

The interval 49–184 (TGNIAEYPTE…KLPGHHNHHP (136 aa)) is disordered. Positions 60-86 (PPAGVAAGTGAAATTAAGVTTSETTTG) are enriched in low complexity. Basic and acidic residues-rich tracts occupy residues 87–98 (QEHHGSLGEHLR) and 122–138 (KDKI…KDEQ). Positions 139–159 (TPTTATTTGPTTTTTTTGAAA) are enriched in low complexity. Residues 160–177 (DQHHEKKGILEKIKEKLP) are compositionally biased toward basic and acidic residues.

The protein belongs to the plant dehydrin family.

Functionally, LEA protein are late embryogenesis abundant in higher plant seed embryos. There are two subsets of LEA proteins (5a, and 5b), the first ones are expressed when the cotyledon weight reach 80 mg and the second set are expressed above 100 mg. The function of those proteins is not known. The sequence is that of Late embryogenesis abundant protein from Raphanus sativus (Radish).